Consider the following 159-residue polypeptide: uncharacterized protein (159 aa).

One can recognise an N-acetyltransferase domain in the interval 7–151; the sequence is LLINYKTLEE…NPLIWEPAHI (145 aa).

This is an uncharacterized protein from Bacillus pumilus (strain SAFR-032).